The sequence spans 618 residues: Proline--tRNA ligase (618 aa).

Belongs to the class-II aminoacyl-tRNA synthetase family. ProS type 1 subfamily. As to quaternary structure, homodimer.

It is found in the cytoplasm. The catalysed reaction is tRNA(Pro) + L-proline + ATP = L-prolyl-tRNA(Pro) + AMP + diphosphate. Functionally, catalyzes the attachment of proline to tRNA(Pro) in a two-step reaction: proline is first activated by ATP to form Pro-AMP and then transferred to the acceptor end of tRNA(Pro). As ProRS can inadvertently accommodate and process non-cognate amino acids such as alanine and cysteine, to avoid such errors it has two additional distinct editing activities against alanine. One activity is designated as 'pretransfer' editing and involves the tRNA(Pro)-independent hydrolysis of activated Ala-AMP. The other activity is designated 'posttransfer' editing and involves deacylation of mischarged Ala-tRNA(Pro). The misacylated Cys-tRNA(Pro) is not edited by ProRS. The chain is Proline--tRNA ligase from Streptococcus uberis (strain ATCC BAA-854 / 0140J).